We begin with the raw amino-acid sequence, 171 residues long: Protein TIFY 11d (171 aa).

Positions 65–100 (PSAGTAPLTIFYDGRMVVVDDVPAEKAAELMRLAGS) constitute a Tify domain. The short motif at 117-142 (PIARKASLQRFLQKRKHRITTTSEPY) is the Jas element. The Nuclear localization signal motif lies at 119-126 (ARKASLQR).

It belongs to the TIFY/JAZ family. In terms of assembly, interacts with BHLH148 and COI1A. Interacts with COI1A, COI1B and COI2 in a coronatine-dependent manner. Coronatine is an analog of jasmonoyl isoleucine (JA-Ile). In terms of processing, ubiquitinated. Increase in jasmonoyl isoleucine (JA-Ile) levels mediates its degradation via COI1A-mediated proteasome pathway.

Its subcellular location is the nucleus. Functionally, repressor of jasmonate (JA) responses. May act on an initial response of JA-regulated gene expression toward drought tolerance as part of a BHLH148-TIFY11D/JAZ12-COI1A complex. This Oryza sativa subsp. indica (Rice) protein is Protein TIFY 11d.